A 227-amino-acid chain; its full sequence is Cytochrome c oxidase subunit 2 (227 aa).

Residues 1–26 (MSTWKNLFLQDSASPLMELLMCFHDH) are Mitochondrial intermembrane-facing. Residues 27–48 (AMLILILITIMVSQMLLSMLFN) traverse the membrane as a helical segment. Topologically, residues 49–62 (KLSHRYLLEGQLIE) are mitochondrial matrix. A helical transmembrane segment spans residues 63 to 82 (TIWTIIPAIILILIALPSLR). Over 83–227 (LLYILDEINN…LFLNWVISKA (145 aa)) the chain is Mitochondrial intermembrane. Residues His-161, Cys-196, Glu-198, Cys-200, His-204, and Met-207 each contribute to the Cu cation site. Residue Glu-198 participates in Mg(2+) binding.

The protein belongs to the cytochrome c oxidase subunit 2 family. Component of the cytochrome c oxidase (complex IV, CIV), a multisubunit enzyme composed of a catalytic core of 3 subunits and several supernumerary subunits. The complex exists as a monomer or a dimer and forms supercomplexes (SCs) in the inner mitochondrial membrane with ubiquinol-cytochrome c oxidoreductase (cytochrome b-c1 complex, complex III, CIII). It depends on Cu cation as a cofactor.

The protein localises to the mitochondrion inner membrane. It catalyses the reaction 4 Fe(II)-[cytochrome c] + O2 + 8 H(+)(in) = 4 Fe(III)-[cytochrome c] + 2 H2O + 4 H(+)(out). Functionally, component of the cytochrome c oxidase, the last enzyme in the mitochondrial electron transport chain which drives oxidative phosphorylation. The respiratory chain contains 3 multisubunit complexes succinate dehydrogenase (complex II, CII), ubiquinol-cytochrome c oxidoreductase (cytochrome b-c1 complex, complex III, CIII) and cytochrome c oxidase (complex IV, CIV), that cooperate to transfer electrons derived from NADH and succinate to molecular oxygen, creating an electrochemical gradient over the inner membrane that drives transmembrane transport and the ATP synthase. Cytochrome c oxidase is the component of the respiratory chain that catalyzes the reduction of oxygen to water. Electrons originating from reduced cytochrome c in the intermembrane space (IMS) are transferred via the dinuclear copper A center (CU(A)) of subunit 2 and heme A of subunit 1 to the active site in subunit 1, a binuclear center (BNC) formed by heme A3 and copper B (CU(B)). The BNC reduces molecular oxygen to 2 water molecules using 4 electrons from cytochrome c in the IMS and 4 protons from the mitochondrial matrix. The polypeptide is Cytochrome c oxidase subunit 2 (COII) (Sitophilus granarius (Granary weevil)).